The sequence spans 314 residues: Protoheme IX farnesyltransferase 2 (314 aa).

9 helical membrane passes run 32-49 (VMSL…AAPV), 54-76 (LLAV…LNMW), 98-118 (IQPH…VMTL), 120-140 (VLVN…YAVV), 153-173 (IVIG…AVTG), 180-200 (IVLF…LALF), 226-246 (IFAY…LGYT), 249-269 (FYGV…WKVL), and 285-305 (FAYS…DSVV).

The protein belongs to the UbiA prenyltransferase family. Protoheme IX farnesyltransferase subfamily.

The protein localises to the cell inner membrane. It carries out the reaction heme b + (2E,6E)-farnesyl diphosphate + H2O = Fe(II)-heme o + diphosphate. The protein operates within porphyrin-containing compound metabolism; heme O biosynthesis; heme O from protoheme: step 1/1. In terms of biological role, converts heme B (protoheme IX) to heme O by substitution of the vinyl group on carbon 2 of heme B porphyrin ring with a hydroxyethyl farnesyl side group. The chain is Protoheme IX farnesyltransferase 2 from Mesorhizobium japonicum (strain LMG 29417 / CECT 9101 / MAFF 303099) (Mesorhizobium loti (strain MAFF 303099)).